The sequence spans 185 residues: Ribosome-recycling factor (185 aa).

The protein belongs to the RRF family.

The protein localises to the cytoplasm. Responsible for the release of ribosomes from messenger RNA at the termination of protein biosynthesis. May increase the efficiency of translation by recycling ribosomes from one round of translation to another. The sequence is that of Ribosome-recycling factor from Clostridium botulinum (strain Alaska E43 / Type E3).